The sequence spans 809 residues: Glycerol-3-phosphate acyltransferase (809 aa).

The short motif at 309-314 is the HXXXXD motif element; it reads HRSHMD.

Belongs to the GPAT/DAPAT family.

The protein resides in the cell inner membrane. It catalyses the reaction sn-glycerol 3-phosphate + an acyl-CoA = a 1-acyl-sn-glycero-3-phosphate + CoA. It functions in the pathway phospholipid metabolism; CDP-diacylglycerol biosynthesis; CDP-diacylglycerol from sn-glycerol 3-phosphate: step 1/3. The protein is Glycerol-3-phosphate acyltransferase of Shewanella oneidensis (strain ATCC 700550 / JCM 31522 / CIP 106686 / LMG 19005 / NCIMB 14063 / MR-1).